The sequence spans 38 residues: Large ribosomal subunit protein bL36 (38 aa).

It belongs to the bacterial ribosomal protein bL36 family.

The polypeptide is Large ribosomal subunit protein bL36 (Lactobacillus johnsonii (strain CNCM I-12250 / La1 / NCC 533)).